A 288-amino-acid polypeptide reads, in one-letter code: Purine nucleoside phosphorylase (288 aa).

A phosphate-binding site is contributed by 65 to 66; that stretch reads RN. Met201 contacts substrate. Residue Thr202 participates in phosphate binding.

This sequence belongs to the PNP/MTAP phosphorylase family. MTAP subfamily. As to quaternary structure, homotrimer.

The protein localises to the cytoplasm. It is found in the nucleus. The enzyme catalyses a purine D-ribonucleoside + phosphate = a purine nucleobase + alpha-D-ribose 1-phosphate. It functions in the pathway purine metabolism; purine nucleoside salvage. Its function is as follows. Purine nucleoside phosphorylase involved in purine salvage. The polypeptide is Purine nucleoside phosphorylase (Drosophila pseudoobscura pseudoobscura (Fruit fly)).